We begin with the raw amino-acid sequence, 648 residues long: 60 kDa heat shock protein homolog 1, mitochondrial (648 aa).

A mitochondrion-targeting transit peptide spans 1–55; the sequence is MFRSCVPKAITSSRCFARMYSKDVRFGSGVRAMMIRGVDILADAVAVTMGPKGRS.

The protein belongs to the chaperonin (HSP60) family.

The protein resides in the mitochondrion matrix. In terms of biological role, prevents misfolding and promotes the refolding and proper assembly of unfolded polypeptides generated under stress conditions. The polypeptide is 60 kDa heat shock protein homolog 1, mitochondrial (Hsp60B) (Drosophila melanogaster (Fruit fly)).